A 516-amino-acid chain; its full sequence is Delta(24)-sterol reductase (516 aa).

Positions Met1–Gly22 are cleaved as a signal peptide. Residues Leu23–Arg31 lie on the Lumenal side of the membrane. A helical membrane pass occupies residues Trp32 to Val52. At Arg53–His516 the chain is on the cytoplasmic side. The region spanning Phe58–Ala234 is the FAD-binding PCMH-type domain. Thr163–Ser175 is an FAD binding site.

This sequence belongs to the FAD-binding oxidoreductase/transferase type 4 family. As to quaternary structure, interacts with DHCR7; this interaction regulates DHCR7 activity. FAD serves as cofactor.

The protein localises to the endoplasmic reticulum membrane. Its subcellular location is the golgi apparatus membrane. The enzyme catalyses cholesterol + NADP(+) = desmosterol + NADPH + H(+). It carries out the reaction lanosterol + NADPH + H(+) = 24,25-dihydrolanosterol + NADP(+). It catalyses the reaction 5alpha-cholest-8-en-3beta-ol + NADP(+) = zymosterol + NADPH + H(+). Its pathway is steroid biosynthesis; cholesterol biosynthesis. Catalyzes the reduction of the delta-24 double bond of sterol intermediates during cholesterol biosynthesis. In addition to its cholesterol-synthesizing activity, can protect cells from oxidative stress by reducing caspase 3 activity during apoptosis induced by oxidative stress. Also protects against amyloid-beta peptide-induced apoptosis. This Macaca fascicularis (Crab-eating macaque) protein is Delta(24)-sterol reductase (DHCR24).